A 161-amino-acid polypeptide reads, in one-letter code: Phosphopantetheine adenylyltransferase (161 aa).

Residue S9 participates in substrate binding. ATP contacts are provided by residues 9-10 (SF) and H17. Substrate is bound by residues K41, L73, and K87. Residues 88–90 (GLR), E98, and 122–128 (FSFLSSS) each bind ATP.

It belongs to the bacterial CoaD family. Homohexamer. Mg(2+) is required as a cofactor.

The protein localises to the cytoplasm. It carries out the reaction (R)-4'-phosphopantetheine + ATP + H(+) = 3'-dephospho-CoA + diphosphate. The protein operates within cofactor biosynthesis; coenzyme A biosynthesis; CoA from (R)-pantothenate: step 4/5. In terms of biological role, reversibly transfers an adenylyl group from ATP to 4'-phosphopantetheine, yielding dephospho-CoA (dPCoA) and pyrophosphate. The sequence is that of Phosphopantetheine adenylyltransferase from Nocardia farcinica (strain IFM 10152).